A 176-amino-acid chain; its full sequence is Nascent polypeptide-associated complex subunit alpha (176 aa).

The NAC-A/B domain maps to 16–80 (PKNEKKAREL…AKVDDMNQRI (65 aa)). The disordered stretch occupies residues 83–110 (AQAAQAAETDAHAGHTHSHGEEDKSPEA). Residues 91–110 (TDAHAGHTHSHGEEDKSPEA) are compositionally biased toward basic and acidic residues. The region spanning 138–175 (LDAKDIDIIVEQTQVSRAKAVKALRKHDGDMVNAIMEL) is the UBA domain.

This sequence belongs to the NAC-alpha family. As to quaternary structure, part of the nascent polypeptide-associated complex (NAC), consisting of EGD2 and EGD1. NAC associates with ribosomes via EGD1.

The protein resides in the cytoplasm. It localises to the nucleus. Component of the nascent polypeptide-associated complex (NAC), a dynamic component of the ribosomal exit tunnel, protecting the emerging polypeptides from interaction with other cytoplasmic proteins to ensure appropriate nascent protein targeting. The NAC complex also promotes mitochondrial protein import by enhancing productive ribosome interactions with the outer mitochondrial membrane and blocks the inappropriate interaction of ribosomes translating non-secretory nascent polypeptides with translocation sites in the membrane of the endoplasmic reticulum. EGD2 may also be involved in transcription regulation. This chain is Nascent polypeptide-associated complex subunit alpha (EGD2), found in Scheffersomyces stipitis (strain ATCC 58785 / CBS 6054 / NBRC 10063 / NRRL Y-11545) (Yeast).